Here is a 444-residue protein sequence, read N- to C-terminus: Bifunctional enolase 2/transcriptional activator (444 aa).

2 residues coordinate substrate: His163 and Glu172. Glu215 serves as the catalytic Proton donor. Residues Asp250, Glu300, and Asp327 each contribute to the Mg(2+) site. The substrate site is built by Glu300 and Asp327. Lys352 (proton acceptor) is an active-site residue. Substrate contacts are provided by residues 379 to 382 (SHRS) and Lys403.

The protein belongs to the enolase family. Homodimer. The cofactor is Mg(2+).

The protein resides in the cytoplasm. It localises to the cytosol. The protein localises to the nucleus. It is found in the mitochondrion outer membrane. It carries out the reaction (2R)-2-phosphoglycerate = phosphoenolpyruvate + H2O. It participates in carbohydrate degradation; glycolysis; pyruvate from D-glyceraldehyde 3-phosphate: step 4/5. Its function is as follows. Multifunctional enzyme that acts as an enolase involved in the metabolism and as a positive regulator of cold-responsive gene transcription. Binds to the cis-element the gene promoter of STZ/ZAT10, a zinc finger transcriptional repressor. In Arabidopsis thaliana (Mouse-ear cress), this protein is Bifunctional enolase 2/transcriptional activator (ENO2).